The primary structure comprises 608 residues: Chaperone protein DnaK (608 aa).

T174 is modified (phosphothreonine; by autocatalysis). The span at 493–505 (YEEEDRKRKESAE) shows a compositional bias: basic and acidic residues. Disordered regions lie at residues 493-514 (YEEE…DSMV) and 577-608 (GQAA…DDDK). Residues 577-590 (GQAAGANPGAQTTG) show a composition bias toward low complexity. Over residues 599 to 608 (AEYKVVDDDK) the composition is skewed to basic and acidic residues.

This sequence belongs to the heat shock protein 70 family.

Acts as a chaperone. The sequence is that of Chaperone protein DnaK from Acetivibrio thermocellus (strain ATCC 27405 / DSM 1237 / JCM 9322 / NBRC 103400 / NCIMB 10682 / NRRL B-4536 / VPI 7372) (Clostridium thermocellum).